A 559-amino-acid polypeptide reads, in one-letter code: Formate--tetrahydrofolate ligase (559 aa).

ATP is bound at residue 66-73 (TPPGEGKT).

It belongs to the formate--tetrahydrofolate ligase family.

The enzyme catalyses (6S)-5,6,7,8-tetrahydrofolate + formate + ATP = (6R)-10-formyltetrahydrofolate + ADP + phosphate. It participates in one-carbon metabolism; tetrahydrofolate interconversion. This Nocardioides sp. (strain ATCC BAA-499 / JS614) protein is Formate--tetrahydrofolate ligase.